A 296-amino-acid polypeptide reads, in one-letter code: Glutamate 5-kinase (296 aa).

Lys15 serves as a coordination point for ATP. Substrate contacts are provided by Ser55, Asp159, and Asn186. Residues 206 to 207 and 248 to 254 each bind ATP; these read SD and TGGIATK.

It belongs to the glutamate 5-kinase family.

The protein localises to the cytoplasm. The enzyme catalyses L-glutamate + ATP = L-glutamyl 5-phosphate + ADP. The protein operates within amino-acid biosynthesis; L-proline biosynthesis; L-glutamate 5-semialdehyde from L-glutamate: step 1/2. Functionally, catalyzes the transfer of a phosphate group to glutamate to form L-glutamate 5-phosphate. This chain is Glutamate 5-kinase, found in Treponema pallidum (strain Nichols).